The chain runs to 92 residues: Cell division protein FtsB (92 aa).

At 1–3 (MRF) the chain is on the cytoplasmic side. A helical membrane pass occupies residues 4-21 (FQVGLLCLALFVQYRLWF). Residues 22–92 (GHNGVQDYTR…TFIRVLPAQQ (71 aa)) are Periplasmic-facing. Residues 40–73 (LQTNEKLIKRNKVLTADIEDLKLGHEGIEERARN) are a coiled coil.

It belongs to the FtsB family. As to quaternary structure, part of a complex composed of FtsB, FtsL and FtsQ.

It is found in the cell inner membrane. In terms of biological role, essential cell division protein. May link together the upstream cell division proteins, which are predominantly cytoplasmic, with the downstream cell division proteins, which are predominantly periplasmic. The sequence is that of Cell division protein FtsB from Pseudoalteromonas translucida (strain TAC 125).